The chain runs to 255 residues: Type III pantothenate kinase (255 aa).

An ATP-binding site is contributed by D6–V13. G107–C110 contacts substrate. D109 acts as the Proton acceptor in catalysis. K(+) is bound at residue D129. T132 lines the ATP pocket. T184 is a binding site for substrate.

This sequence belongs to the type III pantothenate kinase family. Homodimer. Requires NH4(+) as cofactor. The cofactor is K(+).

The protein resides in the cytoplasm. It catalyses the reaction (R)-pantothenate + ATP = (R)-4'-phosphopantothenate + ADP + H(+). It functions in the pathway cofactor biosynthesis; coenzyme A biosynthesis; CoA from (R)-pantothenate: step 1/5. Catalyzes the phosphorylation of pantothenate (Pan), the first step in CoA biosynthesis. The protein is Type III pantothenate kinase of Bifidobacterium longum subsp. infantis (strain ATCC 15697 / DSM 20088 / JCM 1222 / NCTC 11817 / S12).